We begin with the raw amino-acid sequence, 231 residues long: MKKNKKVVVLLSAGLDSTVNAYEAIKHHHEIVLALTFNYGQRAAKKELEASANIAKHLGIPHKVVELPWFKDFNKSSLLVEDQAVPTGSAVEIDNQQKSEETAKSVWVPNRNGIFLNIAAAYAEALGADAVIPGFNAEEAATFPDNSREFLEQATKSLWYSTSNHVTVGCYTAHLKKPDIVRLGQGLKVPWELIWPCYFSGDKWCGQCESCLRSKRAFASANIDVKHLFKE.

Residue 11-21 (LSAGLDSTVNA) coordinates ATP. 4 residues coordinate Zn(2+): Cys-197, Cys-205, Cys-208, and Cys-211.

Belongs to the QueC family. It depends on Zn(2+) as a cofactor.

It catalyses the reaction 7-carboxy-7-deazaguanine + NH4(+) + ATP = 7-cyano-7-deazaguanine + ADP + phosphate + H2O + H(+). Its pathway is purine metabolism; 7-cyano-7-deazaguanine biosynthesis. Functionally, catalyzes the ATP-dependent conversion of 7-carboxy-7-deazaguanine (CDG) to 7-cyano-7-deazaguanine (preQ(0)). This chain is 7-cyano-7-deazaguanine synthase, found in Bdellovibrio bacteriovorus (strain ATCC 15356 / DSM 50701 / NCIMB 9529 / HD100).